Here is a 242-residue protein sequence, read N- to C-terminus: Demethylmenaquinone methyltransferase (242 aa).

S-adenosyl-L-methionine-binding residues include Thr-74 and Asp-93.

It belongs to the class I-like SAM-binding methyltransferase superfamily. MenG/UbiE family.

It carries out the reaction a 2-demethylmenaquinol + S-adenosyl-L-methionine = a menaquinol + S-adenosyl-L-homocysteine + H(+). Its pathway is quinol/quinone metabolism; menaquinone biosynthesis; menaquinol from 1,4-dihydroxy-2-naphthoate: step 2/2. In terms of biological role, methyltransferase required for the conversion of demethylmenaquinol (DMKH2) to menaquinol (MKH2). This chain is Demethylmenaquinone methyltransferase, found in Chlorobaculum tepidum (strain ATCC 49652 / DSM 12025 / NBRC 103806 / TLS) (Chlorobium tepidum).